A 183-amino-acid chain; its full sequence is Mast cell-expressed membrane protein 1 (183 aa).

Residues M1–E26 are disordered. At M1–M70 the chain is on the cytoplasmic side. Residues G15–D24 are compositionally biased toward basic and acidic residues. The helical; Signal-anchor for type II membrane protein transmembrane segment at L71–V91 threads the bilayer. The Extracellular segment spans residues K92–T183. Residue N109 is glycosylated (N-linked (GlcNAc...) asparagine).

The protein resides in the membrane. This Mus musculus (Mouse) protein is Mast cell-expressed membrane protein 1.